Here is a 262-residue protein sequence, read N- to C-terminus: Type III pantothenate kinase (262 aa).

Residue 9–16 (DAGNSRIK) participates in ATP binding. Residues Y96 and 103 to 106 (GSDR) contribute to the substrate site. D105 acts as the Proton acceptor in catalysis. T129 lines the ATP pocket. T189 is a binding site for substrate.

This sequence belongs to the type III pantothenate kinase family. In terms of assembly, homodimer. The cofactor is NH4(+). It depends on K(+) as a cofactor.

It is found in the cytoplasm. The enzyme catalyses (R)-pantothenate + ATP = (R)-4'-phosphopantothenate + ADP + H(+). It functions in the pathway cofactor biosynthesis; coenzyme A biosynthesis; CoA from (R)-pantothenate: step 1/5. Functionally, catalyzes the phosphorylation of pantothenate (Pan), the first step in CoA biosynthesis. In Burkholderia vietnamiensis (strain G4 / LMG 22486) (Burkholderia cepacia (strain R1808)), this protein is Type III pantothenate kinase.